We begin with the raw amino-acid sequence, 250 residues long: Cruxrhodopsin-3 (250 aa).

The Extracellular segment spans residues 1 to 9; that stretch reads MPAPEGEAI. The chain crosses the membrane as a helical span at residues 10–27; that stretch reads WLWLGTAGMFLGMLYFIA. Topologically, residues 28–41 are cytoplasmic; sequence RGWGETDSRRQKFY. Residues 42–60 form a helical membrane-spanning segment; that stretch reads IATILITAIAFVNYLAMAL. At 61 to 77 the chain is on the extracellular side; it reads GFGLTIVEIAGEQRPIY. Residues 78–94 form a helical membrane-spanning segment; it reads WARYSDWLFTTPLLLYD. Topologically, residues 95 to 105 are cytoplasmic; that stretch reads LGLLAGADRNT. The chain crosses the membrane as a helical span at residues 106–125; sequence ISSLVSLDVLMIGTGLVATL. Topologically, residues 126 to 138 are extracellular; that stretch reads SAGSGVLSAGAER. The helical transmembrane segment at 139–158 threads the bilayer; the sequence is LVWWGISTAFLLVLLYFLFS. Over 159–176 the chain is Cytoplasmic; that stretch reads SLSGRVADLPSDTRSTFK. The helical transmembrane segment at 177 to 195 threads the bilayer; sequence TLRNLVTVVWLVYPVWWLV. Over 196 to 207 the chain is Extracellular; that stretch reads GTEGIGLVGIGI. A helical transmembrane segment spans residues 208 to 227; the sequence is ETAGFMVIDLVAKVGFGIIL. An N6-(retinylidene)lysine modification is found at K220. At 228 to 250 the chain is on the cytoplasmic side; sequence LRSHGVLDGAAETTGAGATATAD.

Belongs to the archaeal/bacterial/fungal opsin family. In terms of assembly, homotrimer. Binds bacterioruberin in the crevice between neighboring subunits.

It is found in the cell membrane. In terms of biological role, light-driven proton pump. The chain is Cruxrhodopsin-3 (cop3) from Haloarcula vallismortis (Halobacterium vallismortis).